We begin with the raw amino-acid sequence, 469 residues long: uncharacterized protein (469 aa).

The stretch at 11 to 65 (LFISVAFSQESVEDLKRLLEEYKKKIQEIERRLEELEKAKKEEEKKKEAVALKPT) forms a coiled coil.

This is an uncharacterized protein from Aquifex aeolicus (strain VF5).